The following is a 366-amino-acid chain: Peptide chain release factor 2 (366 aa).

Glutamine 251 bears the N5-methylglutamine mark.

The protein belongs to the prokaryotic/mitochondrial release factor family. Methylated by PrmC. Methylation increases the termination efficiency of RF2.

It is found in the cytoplasm. Functionally, peptide chain release factor 2 directs the termination of translation in response to the peptide chain termination codons UGA and UAA. This chain is Peptide chain release factor 2, found in Exiguobacterium sp. (strain ATCC BAA-1283 / AT1b).